A 366-amino-acid polypeptide reads, in one-letter code: UDP-N-acetylglucosamine 2-epimerase (366 aa).

H207 is a catalytic residue.

Belongs to the UDP-N-acetylglucosamine 2-epimerase family. Homodimer.

It is found in the cytoplasm. The catalysed reaction is UDP-N-acetyl-alpha-D-glucosamine = UDP-N-acetyl-alpha-D-mannosamine. Catalyzes the reversible epimerization at C-2 of UDP-N-acetylglucosamine (UDP-GlcNAc) to produce UDP-N-acetylmannosamine (UDP-ManNAc), the activated donor of ManNAc residues. In Methanocaldococcus jannaschii (strain ATCC 43067 / DSM 2661 / JAL-1 / JCM 10045 / NBRC 100440) (Methanococcus jannaschii), this protein is UDP-N-acetylglucosamine 2-epimerase (wecB).